Consider the following 280-residue polypeptide: MEIFSASASLTLTGFVPRLLPLLSPQARTTLCKPLLSSSSTRLISCHSRIAPSRSLADQSASTGISVVDSDPIDVVKRKAMDIAPELKGASIFLVGINNSIKTNTGKLLAEALRYYYFDSDNLITEAAGGNVSAQALKEADEKAFQESETEVLKQLSSMGRLVVCAGDGAVQSLRNLALLRHGISIWIDVPLDITAKGDDDSFHSEPSPELFDTLKASYEKSRKGYETADVSISLEKIATKLEFEDLEAVTSEDIALEILKEIEKLTRVKKMMEEASRPF.

Residues 1–54 (MEIFSASASLTLTGFVPRLLPLLSPQARTTLCKPLLSSSSTRLISCHSRIAPSR) constitute a chloroplast transit peptide.

Belongs to the shikimate kinase family.

The protein resides in the plastid. Its subcellular location is the chloroplast. Functionally, required for chloroplast biogenesis. This is Probable inactive shikimate kinase like 1, chloroplastic (SKL1) from Arabidopsis thaliana (Mouse-ear cress).